We begin with the raw amino-acid sequence, 868 residues long: Translation initiation factor IF-2 (868 aa).

2 stretches are compositionally biased toward basic and acidic residues: residues 156 to 166 and 199 to 209; these read ETVKEEEKINS and SKKEEVKPEKV. 2 disordered regions span residues 156–177 and 199–269; these read ETVK…QDEL and SKKE…KYRE. A compositionally biased stretch (basic residues) spans 249–260; sequence RGGRSKFKKKKG. The region spanning 368–537 is the tr-type G domain; sequence GRAPVVTIMG…LLQSEVLELK (170 aa). Residues 377–384 form a G1 region; sequence GHVDHGKT. 377–384 is a binding site for GTP; the sequence is GHVDHGKT. Positions 402-406 are G2; the sequence is GITQH. The tract at residues 423–426 is G3; that stretch reads DTPG. Residues 423 to 427 and 477 to 480 contribute to the GTP site; these read DTPGH and NKMD. The interval 477 to 480 is G4; that stretch reads NKMD. The tract at residues 513 to 515 is G5; the sequence is SAK.

It belongs to the TRAFAC class translation factor GTPase superfamily. Classic translation factor GTPase family. IF-2 subfamily.

It is found in the cytoplasm. Functionally, one of the essential components for the initiation of protein synthesis. Protects formylmethionyl-tRNA from spontaneous hydrolysis and promotes its binding to the 30S ribosomal subunits. Also involved in the hydrolysis of GTP during the formation of the 70S ribosomal complex. The sequence is that of Translation initiation factor IF-2 from Legionella pneumophila subsp. pneumophila (strain Philadelphia 1 / ATCC 33152 / DSM 7513).